The primary structure comprises 314 residues: Methionyl-tRNA formyltransferase (314 aa).

113 to 116 (SLLP) contributes to the (6S)-5,6,7,8-tetrahydrofolate binding site.

It belongs to the Fmt family.

It catalyses the reaction L-methionyl-tRNA(fMet) + (6R)-10-formyltetrahydrofolate = N-formyl-L-methionyl-tRNA(fMet) + (6S)-5,6,7,8-tetrahydrofolate + H(+). Its function is as follows. Attaches a formyl group to the free amino group of methionyl-tRNA(fMet). The formyl group appears to play a dual role in the initiator identity of N-formylmethionyl-tRNA by promoting its recognition by IF2 and preventing the misappropriation of this tRNA by the elongation apparatus. The chain is Methionyl-tRNA formyltransferase from Chlorobaculum tepidum (strain ATCC 49652 / DSM 12025 / NBRC 103806 / TLS) (Chlorobium tepidum).